The sequence spans 233 residues: Cilia- and flagella-associated protein 299 (233 aa).

It is found in the cytoplasm. The protein resides in the nucleus. Functionally, may be involved in spermatogenesis. The polypeptide is Cilia- and flagella-associated protein 299 (Xenopus laevis (African clawed frog)).